The following is an 804-amino-acid chain: Phenylalanine--tRNA ligase beta subunit (804 aa).

The 114-residue stretch at P40–A153 folds into the tRNA-binding domain. One can recognise a B5 domain in the interval P400–A476. 4 residues coordinate Mg(2+): D454, D460, E463, and E464. The FDX-ACB domain occupies S710–R802.

It belongs to the phenylalanyl-tRNA synthetase beta subunit family. Type 1 subfamily. In terms of assembly, tetramer of two alpha and two beta subunits. Requires Mg(2+) as cofactor.

It is found in the cytoplasm. The catalysed reaction is tRNA(Phe) + L-phenylalanine + ATP = L-phenylalanyl-tRNA(Phe) + AMP + diphosphate + H(+). In Chlorobium luteolum (strain DSM 273 / BCRC 81028 / 2530) (Pelodictyon luteolum), this protein is Phenylalanine--tRNA ligase beta subunit.